Here is a 306-residue protein sequence, read N- to C-terminus: Aspartate carbamoyltransferase catalytic subunit (306 aa).

Arg54 and Thr55 together coordinate carbamoyl phosphate. Lys83 lines the L-aspartate pocket. 3 residues coordinate carbamoyl phosphate: Arg104, His132, and Gln135. L-aspartate-binding residues include Arg165 and Arg227. Carbamoyl phosphate contacts are provided by Leu266 and Pro267.

It belongs to the aspartate/ornithine carbamoyltransferase superfamily. ATCase family. As to quaternary structure, heterododecamer (2C3:3R2) of six catalytic PyrB chains organized as two trimers (C3), and six regulatory PyrI chains organized as three dimers (R2).

The catalysed reaction is carbamoyl phosphate + L-aspartate = N-carbamoyl-L-aspartate + phosphate + H(+). It functions in the pathway pyrimidine metabolism; UMP biosynthesis via de novo pathway; (S)-dihydroorotate from bicarbonate: step 2/3. Functionally, catalyzes the condensation of carbamoyl phosphate and aspartate to form carbamoyl aspartate and inorganic phosphate, the committed step in the de novo pyrimidine nucleotide biosynthesis pathway. This is Aspartate carbamoyltransferase catalytic subunit from Finegoldia magna (strain ATCC 29328 / DSM 20472 / WAL 2508) (Peptostreptococcus magnus).